Here is an 80-residue protein sequence, read N- to C-terminus: Exodeoxyribonuclease 7 small subunit (80 aa).

The protein belongs to the XseB family. As to quaternary structure, heterooligomer composed of large and small subunits.

The protein resides in the cytoplasm. The enzyme catalyses Exonucleolytic cleavage in either 5'- to 3'- or 3'- to 5'-direction to yield nucleoside 5'-phosphates.. Its function is as follows. Bidirectionally degrades single-stranded DNA into large acid-insoluble oligonucleotides, which are then degraded further into small acid-soluble oligonucleotides. This is Exodeoxyribonuclease 7 small subunit from Pseudoalteromonas translucida (strain TAC 125).